We begin with the raw amino-acid sequence, 350 residues long: MEASAPDRARRGWRRARAAASPLSRAAVVLLLSALVLRAPPSVGYLDRLPRSFHLTQESAKIVGSPNFPVKVYVMLHQKSPHVLCVTQRLRNFELVDPSFQWHGPKGKIVSENSTAQVTSTGSLVFQNFEESMSGVYTCFLEYKPTVEEVVKNLQLKYIIYAYREPRYYYQFTARYHAAPCNSIYNISFEKKLLQILSKLVLDLSCEVSLLKSECHRVKMQRAGLQNELFFTFSVSSLDTEKGPKPCAGHSCESSKRLSKAKNLIERFFNQQVEVLGRRAEPLPEIYYIEGTLQMVWINRCFPGYGMNILKHPKCPECCVICSPGTYNSRDGIHCLQCNSSLVFGAKACL.

The N-terminal stretch at 1–38 is a signal peptide; the sequence is MEASAPDRARRGWRRARAAASPLSRAAVVLLLSALVLR. N-linked (GlcNAc...) asparagine glycans are attached at residues Asn-113, Asn-186, and Asn-339.

The protein belongs to the zona pellucida-binding protein Sp38 family. N-glycosylated. Expressed in testis. Detected in sperm cells.

The protein localises to the cytoplasmic vesicle. Its subcellular location is the secretory vesicle. It localises to the acrosome. The protein resides in the secreted. It is found in the acrosome membrane. In terms of biological role, plays a role in acrosome compaction and sperm morphogenesis. Is implicated in sperm-oocyte interaction during fertilization. This Sus scrofa (Pig) protein is Zona pellucida-binding protein 1 (ZPBP).